A 132-amino-acid polypeptide reads, in one-letter code: uncharacterized protein (132 aa).

The N-terminal stretch at 1-17 is a signal peptide; it reads MCPECFFLMLFFCGYRA. Residues 25 to 39 are compositionally biased toward low complexity; sequence SSSSSSSSSSSFRSS. Residues 25 to 79 form a disordered region; that stretch reads SSSSSSSSSSSFRSSPAYGFSGRPPGGAGCRERSQRSCLRPGGLPSLTRNPGLQR.

This is an uncharacterized protein from Escherichia coli (strain K12).